The sequence spans 494 residues: tRNA (guanine(37)-N(1))-methyltransferase (494 aa).

The N-terminal 32 residues, 1-32 (MRIRRILYFYGNLPNTYTANVLRRLAFSCWHT), are a transit peptide targeting the mitochondrion. S-adenosyl-L-methionine contacts are provided by residues His-278, 316 to 317 (DL), 344 to 345 (DG), and Asn-377. The tract at residues 468-494 (DTGEPESKRPRTAEAFPLPHVQQSRNS) is disordered.

This sequence belongs to the class I-like SAM-binding methyltransferase superfamily. TRM5/TYW2 family. As to quaternary structure, monomer.

The protein resides in the mitochondrion matrix. It localises to the nucleus. Its subcellular location is the cytoplasm. It catalyses the reaction guanosine(37) in tRNA + S-adenosyl-L-methionine = N(1)-methylguanosine(37) in tRNA + S-adenosyl-L-homocysteine + H(+). Involved in mitochondrial tRNA methylation. Specifically methylates the N1 position of guanosine-37 in various tRNAs. Methylation is not dependent on the nature of the nucleoside 5' of the target nucleoside. This is the first step in the biosynthesis of wybutosine (yW), a modified base adjacent to the anticodon of tRNAs and required for accurate decoding. The protein is tRNA (guanine(37)-N(1))-methyltransferase (trmt5) of Xenopus tropicalis (Western clawed frog).